The primary structure comprises 447 residues: N-succinylarginine dihydrolase (447 aa).

Substrate-binding positions include 19–28 (AGLSFGNEAS), asparagine 110, and 137–138 (HR). Residue glutamate 174 is part of the active site. Arginine 212 provides a ligand contact to substrate. Residue histidine 248 is part of the active site. Substrate contacts are provided by aspartate 250 and asparagine 359. Cysteine 365 functions as the Nucleophile in the catalytic mechanism.

Belongs to the succinylarginine dihydrolase family. In terms of assembly, homodimer.

The enzyme catalyses N(2)-succinyl-L-arginine + 2 H2O + 2 H(+) = N(2)-succinyl-L-ornithine + 2 NH4(+) + CO2. The protein operates within amino-acid degradation; L-arginine degradation via AST pathway; L-glutamate and succinate from L-arginine: step 2/5. In terms of biological role, catalyzes the hydrolysis of N(2)-succinylarginine into N(2)-succinylornithine, ammonia and CO(2). The polypeptide is N-succinylarginine dihydrolase (Escherichia coli (strain ATCC 8739 / DSM 1576 / NBRC 3972 / NCIMB 8545 / WDCM 00012 / Crooks)).